Consider the following 179-residue polypeptide: Large ribosomal subunit protein uL6 (179 aa).

Belongs to the universal ribosomal protein uL6 family. Part of the 50S ribosomal subunit.

Its function is as follows. This protein binds to the 23S rRNA, and is important in its secondary structure. It is located near the subunit interface in the base of the L7/L12 stalk, and near the tRNA binding site of the peptidyltransferase center. The chain is Large ribosomal subunit protein uL6 from Clostridium novyi (strain NT).